The following is a 272-amino-acid chain: Undecaprenyl-diphosphatase (272 aa).

Helical transmembrane passes span 4-24 (IHSL…EFLP), 45-65 (AETF…VMFW), 89-109 (LTLG…LVFH), 115-135 (LFNP…LIAA), 152-174 (TYRQ…FSRS), 189-209 (YAAS…ATAL), 225-245 (MFAV…KTFL), and 251-271 (ISFI…YVVF).

The protein belongs to the UppP family.

The protein localises to the cell inner membrane. It catalyses the reaction di-trans,octa-cis-undecaprenyl diphosphate + H2O = di-trans,octa-cis-undecaprenyl phosphate + phosphate + H(+). Functionally, catalyzes the dephosphorylation of undecaprenyl diphosphate (UPP). Confers resistance to bacitracin. This Citrobacter koseri (strain ATCC BAA-895 / CDC 4225-83 / SGSC4696) protein is Undecaprenyl-diphosphatase.